Consider the following 84-residue polypeptide: MKVTLIAILTCAAVLVLHTTAAEELEESQLMEVGMPDTELAAVDGERLFECSVSCEIEKEGNKDCKKKKCKGGWKCKFNMCVKV.

Positions 1 to 22 (MKVTLIAILTCAAVLVLHTTAA) are cleaved as a signal peptide. A propeptide spanning residues 23-47 (EELEESQLMEVGMPDTELAAVDGER) is cleaved from the precursor. 3 disulfides stabilise this stretch: cysteine 51–cysteine 65, cysteine 55–cysteine 76, and cysteine 70–cysteine 81.

The protein belongs to the neurotoxin 12 (Hwtx-2) family. 02 (Hwtx-2) subfamily. As to expression, expressed by the venom gland.

Its subcellular location is the secreted. In terms of biological role, postsynaptic neurotoxin. The chain is U4-theraphotoxin-Hhn1a from Cyriopagopus hainanus (Chinese bird spider).